The sequence spans 552 residues: MVVETIERSCEGSKRRHVNGGDIAVPCSGEECSNGDINVAPGVSAKRARVSREMTFEDIYGADALLNDDDDEDDDCDWEPVQAPMEFVKWCCVNCTMSNPGDMVHCCICGEHKESGILRHGYLASPFFKDTGLIEVEEKYGGSSSATSSTAVGFDERMLLHSEFEVKAQPHPERPDRLRAIAASLATAGVFPGRCLPINAREITKQELQMVHTSEHVDAVDTTSQLLYSYFTSDTYANEYSARAARLAAGLCADLATDIFTGRVKNGFALVRPPGHHAGVRHAMGFCLHNNAAVAALVAQAAGAKKVLIVDWDVHHGNGTQEIFEQNKSVLYISLHRHEGGNFYPGTGAADEVGSNGGEGYCVNVPWSCGGVGDKDYIFAFQHVVLPIASAFSPDFVIISAGFDAARGDPLGCCDVTPAGYSRMTQMLGDLCGGKMLVILEGGYNLRSISASATAVIKVLLGENPENELPIATTPSVAGLQTVLDVLNIQLEFWPSLAISYSKLLSELEARLIENKKNQMKRKVVRVPTWWKWGRKKLLYNFLSARMISRSK.

Residues glutamate 86–serine 115 form a RanBP2-type zinc finger. Residues serine 149–glycine 462 are histone deacetylase. The Proton donor/acceptor role is filled by histidine 277. Residues aspartate 313, histidine 315, and aspartate 404 each coordinate Zn(2+).

It belongs to the histone deacetylase family. HD type 2 subfamily. Interacts with PIF3 in the dark. Interacts with HY5. Interacts with MYB96. Forms homotetramers. Zn(2+) is required as a cofactor. Expressed in stems, leaves, flowers, siliques and mature seeds.

Its subcellular location is the nucleus. The protein resides in the cytoplasm. The enzyme catalyses N(6)-acetyl-L-lysyl-[histone] + H2O = L-lysyl-[histone] + acetate. With respect to regulation, inhibited by trichostatin A (TSA), a well-known histone deacetylase inhibitor. In terms of biological role, responsible for the deacetylation of lysine residues on the N-terminal part of the core histones (H2A, H2B, H3 and H4). Histone deacetylation gives a tag for epigenetic repression and plays an important role in transcriptional regulation, cell cycle progression and developmental events. Histone deacetylases act via the formation of large multiprotein complexes. Represses chlorophyll biosynthesis and photosynthesis in the dark. Is recruited by PIF3 to the promoters of chlorophyll biosynthetic and photosynthetic genes, and represses their transcription by histone deacetylation. Involved in the repression of hypocotyl cell elongation to promote photomorphogenesis. Is recruited by HY5 to the promoters of a subset of cell wall organization and auxin signaling-related genes, and represses gene expression by decreasing the levels of histone H4 acetylation in a light-dependent manner. Promotes abscisic acid (ABA) signaling. Is recruited by MYB96 to the promoters of a subset of Rho GTPase (ROP) genes, which repress ABA signaling at the early stages of signal transduction. Represses ROP expression by removing acetyl groups of histone H3 and H4 from the cognate regions, particularly in the presence of ABA. Represses the plant response to elevated ambient temperature by directly repressing warm temperature-responsive genes. The protein is Histone deacetylase 15 of Arabidopsis thaliana (Mouse-ear cress).